The primary structure comprises 570 residues: Proline--tRNA ligase (570 aa).

This sequence belongs to the class-II aminoacyl-tRNA synthetase family. ProS type 1 subfamily. In terms of assembly, homodimer.

It is found in the cytoplasm. The enzyme catalyses tRNA(Pro) + L-proline + ATP = L-prolyl-tRNA(Pro) + AMP + diphosphate. Its function is as follows. Catalyzes the attachment of proline to tRNA(Pro) in a two-step reaction: proline is first activated by ATP to form Pro-AMP and then transferred to the acceptor end of tRNA(Pro). As ProRS can inadvertently accommodate and process non-cognate amino acids such as alanine and cysteine, to avoid such errors it has two additional distinct editing activities against alanine. One activity is designated as 'pretransfer' editing and involves the tRNA(Pro)-independent hydrolysis of activated Ala-AMP. The other activity is designated 'posttransfer' editing and involves deacylation of mischarged Ala-tRNA(Pro). The misacylated Cys-tRNA(Pro) is not edited by ProRS. The sequence is that of Proline--tRNA ligase from Shewanella oneidensis (strain ATCC 700550 / JCM 31522 / CIP 106686 / LMG 19005 / NCIMB 14063 / MR-1).